Reading from the N-terminus, the 317-residue chain is L-lactate dehydrogenase (317 aa).

Residues Val16, Asp37, Lys42, Tyr68, and 82 to 83 (GA) each bind NAD(+). Positions 85 and 91 each coordinate substrate. NAD(+) contacts are provided by residues Thr104, 121–123 (ATN), and Ser146. Residue 123–126 (NPVD) participates in substrate binding. 151–154 (DTAR) lines the substrate pocket. Arg156 and His171 together coordinate beta-D-fructose 1,6-bisphosphate. Catalysis depends on His178, which acts as the Proton acceptor. At Tyr222 the chain carries Phosphotyrosine. Thr231 lines the substrate pocket.

This sequence belongs to the LDH/MDH superfamily. LDH family. Homotetramer.

Its subcellular location is the cytoplasm. It carries out the reaction (S)-lactate + NAD(+) = pyruvate + NADH + H(+). It participates in fermentation; pyruvate fermentation to lactate; (S)-lactate from pyruvate: step 1/1. Allosterically activated by fructose 1,6-bisphosphate (FBP). In terms of biological role, catalyzes the conversion of lactate to pyruvate. The protein is L-lactate dehydrogenase of Corynebacterium efficiens (strain DSM 44549 / YS-314 / AJ 12310 / JCM 11189 / NBRC 100395).